The chain runs to 346 residues: MAATPDKGKALELALAQIDKQYGKGSVMRLGDETRAPIEVIPTGSISLDVALGIGGLPRGRIVEVYGPESSGKTSVALHAVANAQKLGGTAAFIDAEHALDPEYAKAIGVDTDSLLVSQPDTGEQALEIADMLIRSGALDIIVIDSVAALVPRAEIEGEMGDSHVGLQARLMSQALRKLTSALYNAKTTAIFINQLREKVGVMFGSPETTTGGKALKFYSSVRLDVRRIETLKDGSDAVGNRTRVKVVKNKVAPPFKQAEFDIIYGIGISREGSLIDMGVEQGIIRKSGAWYTYEGDQLGQGKENARKFMRENPDVANEIEKRIKEKLGIGAQVDAETADPAPVDF.

67–74 (GPESSGKT) lines the ATP pocket.

This sequence belongs to the RecA family.

The protein localises to the cytoplasm. Its function is as follows. Can catalyze the hydrolysis of ATP in the presence of single-stranded DNA, the ATP-dependent uptake of single-stranded DNA by duplex DNA, and the ATP-dependent hybridization of homologous single-stranded DNAs. It interacts with LexA causing its activation and leading to its autocatalytic cleavage. This Saccharopolyspora erythraea (strain ATCC 11635 / DSM 40517 / JCM 4748 / NBRC 13426 / NCIMB 8594 / NRRL 2338) protein is Protein RecA.